We begin with the raw amino-acid sequence, 508 residues long: Protein adenylyltransferase fic-1 (508 aa).

Residues 44–64 (TVIIISVLVSLICQHFVPYAV) traverse the membrane as a helical segment. TPR repeat units follow at residues 147-180 (AILA…APTN) and 181-214 (PQIL…DPGN). Residues 270-275 (TVAIEG) carry the Inhibitory (S/T)XXXE(G/N) motif motif. E274 contacts ATP. The 136-residue stretch at 326–461 (ISIDDILEMH…LRPFVRYVAK (136 aa)) folds into the Fido domain. Position 352 is an O-AMP-threonine; by autocatalysis (T352). 357-360 (VGRF) serves as a coordination point for ATP. H404 is a catalytic residue. ATP-binding positions include 408 to 415 (DGNGRTAR), 440 to 441 (YY), and N448. The residue at position 476 (T476) is an O-AMP-threonine; by autocatalysis. The tract at residues 482–508 (LNSGDSKLTPEESEVSEKIEAECRAGN) is disordered. Over residues 496–508 (VSEKIEAECRAGN) the composition is skewed to basic and acidic residues.

It belongs to the fic family. In terms of assembly, forms homodimers; homodimerization might be required for adenylyltransferase activity. As to expression, ubiquitously expressed, with high expression in the germline.

It is found in the endoplasmic reticulum membrane. It localises to the nucleus membrane. It carries out the reaction L-tyrosyl-[protein] + ATP = O-(5'-adenylyl)-L-tyrosyl-[protein] + diphosphate. The catalysed reaction is L-threonyl-[protein] + ATP = 3-O-(5'-adenylyl)-L-threonyl-[protein] + diphosphate. The enzyme catalyses 3-O-(5'-adenylyl)-L-threonyl-[protein] + H2O = L-threonyl-[protein] + AMP + H(+). The side chain of Glu-274 determines which of the two opposing activities (AMPylase or de-AMPylase) will take place. In response to endoplasmic reticulum stress, mediates de-AMPylase activity. Adenylyltransferase activity is inhibited by the inhibitory helix present at the N-terminus: Glu-274 binds ATP and competes with ATP-binding at Arg-415, thereby preventing adenylyltransferase activity. In unstressed cells, disengagement of Glu-274 promotes adenylyltransferase activity. Activation dissociates ATP-binding from Glu-274, allowing ordered binding of the entire ATP moiety with the alpha-phosphate in an orientation that is productive for accepting an incoming target hydroxyl side chain. Its function is as follows. Protein that can both mediate the addition of adenosine 5'-monophosphate (AMP) to specific residues of target proteins (AMPylation), and the removal of the same modification from target proteins (de-AMPylation), depending on the context. The side chain of Glu-274 determines which of the two opposing activities (AMPylase or de-AMPylase) will take place. Adenylyltransferase that mediates the addition of adenosine 5'-monophosphate (AMP) to specific residues of target proteins. In vivo target proteins include the heat-shock 70 family proteins hsp-1 and hsp-3 and the translation elongation factors eef-1A, eef-1G and eef-2. Can AMPylate core histone H3 in vitro. Can also act as a phosphodiesterase by mediating removal of ATP (de-AMPylation) from target proteins. Decreases susceptibility to P.aeruginosa-mediated killing and might therefore play a role in the innate immune response. The sequence is that of Protein adenylyltransferase fic-1 from Caenorhabditis elegans.